Reading from the N-terminus, the 102-residue chain is Protein V2 (102 aa).

In terms of biological role, may be involved in the regulation of ssDNA versus dsDNA levels. In Beet curly top virus (strain California/Logan) (BCTV), this protein is Protein V2.